A 190-amino-acid chain; its full sequence is dCTP deaminase (190 aa).

113–118 (KSTYAR) lines the dCTP pocket. Glu139 acts as the Proton donor/acceptor in catalysis. DCTP contacts are provided by Gln158, Tyr172, Lys181, and Gln182.

Belongs to the dCTP deaminase family. In terms of assembly, homotrimer.

The catalysed reaction is dCTP + H2O + H(+) = dUTP + NH4(+). It participates in pyrimidine metabolism; dUMP biosynthesis; dUMP from dCTP (dUTP route): step 1/2. In terms of biological role, catalyzes the deamination of dCTP to dUTP. This chain is dCTP deaminase, found in Chlamydia trachomatis serovar A (strain ATCC VR-571B / DSM 19440 / HAR-13).